The following is a 448-amino-acid chain: 5-hydroxytryptamine receptor 7 (448 aa).

Residues 1–86 are Extracellular-facing; it reads MMDVNSSGRP…INYGRVEKVV (86 aa). 2 N-linked (GlcNAc...) asparagine glycosylation sites follow: Asn5 and Asn69. Residues 87-111 traverse the membrane as a helical segment; that stretch reads IGSILTLITLLTIAGNCLVVISVCF. Residues 112 to 121 are Cytoplasmic-facing; sequence VKKLRQPSNY. Residues 122–143 form a helical membrane-spanning segment; sequence LIVSLALADLSVAVAVMPFVSV. Topologically, residues 144-155 are extracellular; sequence TDLIGGKWIFGH. A helical membrane pass occupies residues 156 to 181; the sequence is FFCNVFIAMDVMCCTASIMTLCVISI. Cys158 and Cys234 form a disulfide bridge. Residue Asp165 participates in serotonin binding. The Cytoplasmic portion of the chain corresponds to 182 to 201; that stretch reads DRYLGITRPLTYPVRQNGKC. The helical transmembrane segment at 202-222 threads the bilayer; it reads MAKMILSVWLLSASITLPPLF. Residues 223 to 240 lie on the Extracellular side of the membrane; sequence GWAQNVNDDKVCLISQDF. Residues 241-263 form a helical membrane-spanning segment; it reads GYTIYSTAVAFYIPMSVMLFMYY. The Cytoplasmic segment spans residues 264–329; the sequence is QIYKAARKSA…SIFKREQKAA (66 aa). A helical transmembrane segment spans residues 330–355; it reads TTLGIIVGAFTVCWLPFFLLSTARPF. Residues 356 to 366 lie on the Extracellular side of the membrane; it reads ICGTSCSCIPL. A helical transmembrane segment spans residues 367 to 390; sequence WVERTCLWLGYANSLINPFIYAFF. Residues 391–448 lie on the Cytoplasmic side of the membrane; it reads NRDLRTTYRSLLQCQYRNINRKLSAAGMHEALKLAERPERSEFVLQNSDHCGKKGHDT. A lipid anchor (S-palmitoyl cysteine) is attached at Cys404.

It belongs to the G-protein coupled receptor 1 family. As to expression, thalamus, hypothalamus, and the hippocampal rudiments.

The protein localises to the cell membrane. Functionally, G-protein coupled receptor for 5-hydroxytryptamine (serotonin), a biogenic hormone that functions as a neurotransmitter, a hormone and a mitogen. Ligand binding causes a conformation change that triggers signaling via guanine nucleotide-binding proteins (G proteins) and modulates the activity of downstream effectors. HTR7 is coupled to G(s) G alpha proteins and mediates activation of adenylate cyclase activity. This Rattus norvegicus (Rat) protein is 5-hydroxytryptamine receptor 7.